The following is a 395-amino-acid chain: Acetate kinase 2 (395 aa).

N8 lines the Mg(2+) pocket. Position 15 (K15) interacts with ATP. Position 89 (R89) interacts with substrate. The active-site Proton donor/acceptor is D146. ATP is bound by residues 206–210, 283–285, and 331–335; these read HIGNG, DMR, and GVGEN. Mg(2+) is bound at residue E383.

The protein belongs to the acetokinase family. In terms of assembly, homodimer. Mg(2+) serves as cofactor. It depends on Mn(2+) as a cofactor.

The protein resides in the cytoplasm. It catalyses the reaction acetate + ATP = acetyl phosphate + ADP. Its pathway is metabolic intermediate biosynthesis; acetyl-CoA biosynthesis; acetyl-CoA from acetate: step 1/2. In terms of biological role, catalyzes the formation of acetyl phosphate from acetate and ATP. Can also catalyze the reverse reaction. The sequence is that of Acetate kinase 2 from Lactococcus lactis subsp. lactis (strain IL1403) (Streptococcus lactis).